Consider the following 117-residue polypeptide: Ribosome-binding factor A (117 aa).

It belongs to the RbfA family. As to quaternary structure, monomer. Binds 30S ribosomal subunits, but not 50S ribosomal subunits or 70S ribosomes.

Its subcellular location is the cytoplasm. Its function is as follows. One of several proteins that assist in the late maturation steps of the functional core of the 30S ribosomal subunit. Associates with free 30S ribosomal subunits (but not with 30S subunits that are part of 70S ribosomes or polysomes). Required for efficient processing of 16S rRNA. May interact with the 5'-terminal helix region of 16S rRNA. In Syntrophobacter fumaroxidans (strain DSM 10017 / MPOB), this protein is Ribosome-binding factor A.